The primary structure comprises 136 residues: Small ribosomal subunit protein uS9 (136 aa).

The tract at residues 111 to 136 (TRDPRMKERKKTGQPGARKRFQFSKR) is disordered. Basic residues predominate over residues 117–136 (KERKKTGQPGARKRFQFSKR).

This sequence belongs to the universal ribosomal protein uS9 family.

The chain is Small ribosomal subunit protein uS9 from Methylacidiphilum infernorum (isolate V4) (Methylokorus infernorum (strain V4)).